We begin with the raw amino-acid sequence, 258 residues long: MAASVLNTLLRRLPMLSLFRGAHRVQVPLQTLCTKPPSEEDSLSPVPISPYKDEPWKYLESEEYQERYGSRPVWADYRRNHKGGVPPQRTRKTCIRGNKVAGNPCPICRDHKLHVDFRNVKLLEQFVCAHTGIIFHSLYTGVCVKQHKRLTQAIQKARDHGLLIYHIPQVEPRDRDFSISHGAVSATPPAPTLISGDPWYPWYNWKQPPERELSRLRRLYQGHLREESGPPPESMPKMPPTAPAEASFTGQTDPQSAL.

A mitochondrion-targeting transit peptide spans 1–35 (MAASVLNTLLRRLPMLSLFRGAHRVQVPLQTLCTK). 2 positions are modified to phosphoserine: S38 and S49. The segment at 218 to 258 (RLYQGHLREESGPPPESMPKMPPTAPAEASFTGQTDPQSAL) is disordered. The span at 229–242 (GPPPESMPKMPPTA) shows a compositional bias: pro residues. Residues 248–258 (FTGQTDPQSAL) show a composition bias toward polar residues.

It belongs to the bacterial ribosomal protein bS18 family. Mitochondrion-specific ribosomal protein mS40 subfamily. In terms of assembly, component of the mitochondrial ribosome small subunit (28S) which comprises a 12S rRNA and about 30 distinct proteins.

It is found in the mitochondrion. The sequence is that of Small ribosomal subunit protein mS40 (MRPS18B) from Macaca mulatta (Rhesus macaque).